Consider the following 232-residue polypeptide: Orotate phosphoribosyltransferase (232 aa).

5-phospho-alpha-D-ribose 1-diphosphate contacts are provided by residues Arg-107, Lys-108, Lys-111, His-113, and 133 to 141; that span reads EDLTTAGGS. Thr-137 serves as a coordination point for orotate.

The protein belongs to the purine/pyrimidine phosphoribosyltransferase family. PyrE subfamily. In terms of assembly, homodimer. It depends on Mg(2+) as a cofactor.

The catalysed reaction is orotidine 5'-phosphate + diphosphate = orotate + 5-phospho-alpha-D-ribose 1-diphosphate. It functions in the pathway pyrimidine metabolism; UMP biosynthesis via de novo pathway; UMP from orotate: step 1/2. Its function is as follows. Catalyzes the transfer of a ribosyl phosphate group from 5-phosphoribose 1-diphosphate to orotate, leading to the formation of orotidine monophosphate (OMP). In Rhizobium rhizogenes (strain K84 / ATCC BAA-868) (Agrobacterium radiobacter), this protein is Orotate phosphoribosyltransferase.